The chain runs to 208 residues: High frequency lysogenization protein HflD homolog (208 aa).

Residues 91-125 are a coiled coil; sequence LMVLERKLNANKQAMNQLGERLGQLERQLAHFDLE.

This sequence belongs to the HflD family.

The protein resides in the cytoplasm. It is found in the cell inner membrane. The protein is High frequency lysogenization protein HflD homolog of Serratia proteamaculans (strain 568).